The chain runs to 345 residues: S-adenosylmethionine:tRNA ribosyltransferase-isomerase (345 aa).

The protein belongs to the QueA family. In terms of assembly, monomer.

Its subcellular location is the cytoplasm. It catalyses the reaction 7-aminomethyl-7-carbaguanosine(34) in tRNA + S-adenosyl-L-methionine = epoxyqueuosine(34) in tRNA + adenine + L-methionine + 2 H(+). It participates in tRNA modification; tRNA-queuosine biosynthesis. Functionally, transfers and isomerizes the ribose moiety from AdoMet to the 7-aminomethyl group of 7-deazaguanine (preQ1-tRNA) to give epoxyqueuosine (oQ-tRNA). The chain is S-adenosylmethionine:tRNA ribosyltransferase-isomerase from Shewanella amazonensis (strain ATCC BAA-1098 / SB2B).